Reading from the N-terminus, the 859-residue chain is Envelope glycoprotein gp160 (859 aa).

The signal sequence occupies residues 1–23; sequence MAYFSSRLPIALLLIGISGFVCK. The Extracellular segment spans residues 24–678; that stretch reads QYVTVFYGIP…WFDLTSWIKY (655 aa). N37 carries N-linked (GlcNAc...) asparagine; by host glycosylation. The cysteines at positions 44 and 57 are disulfide-linked. Residues N70, N112, N122, N142, N150, N165, N191, N206, N238, N241, N248, N272, N278, N289, N300, N310, N343, N367, N400, N410, N413, N450, N464, and N468 are each glycosylated (N-linked (GlcNAc...) asparagine; by host). Cystine bridges form between C101–C214, C108–C205, C113–C164, C227–C257, and C237–C249. Residues 113 to 163 form a V1 region; that stretch reads CSKTETNPGNASSTTTTKPTTTSRGLKTINETDPCIKNDSCTGLGEEEIMQ. The segment at 164 to 205 is V2; that stretch reads CNFSMTGLRRDELKQYKDTWYSEDLECNNTRKYTSRCYIRTC. Residues 305–337 are V3; it reads CKRPGNKTVVPIRTVSGLLFHSQPINKRPRQAW. C305 and C338 are joined by a disulfide. Cystine bridges form between C392-C449 and C399-C422. Residues 399–422 are V4; that stretch reads CNMTWFLNWVENKTNTTRRNYAPC. The V5 stretch occupies residues 465 to 471; the sequence is STTNISV. Positions 514 to 534 are fusion peptide; that stretch reads GVMVLGFLGFLAMAGSAMGAT. Positions 577-593 are immunosuppression; it reads LQARVTAIEKYLKDQAQ. 3 N-linked (GlcNAc...) asparagine; by host glycosylation sites follow: N613, N622, and N638. Positions 626–647 form a coiled coil; it reads QQWEKQVHFLDANITALLEEAQ. The tract at residues 659 to 680 is MPER; binding to GalCer; sequence KINSWDVFGNWFDLTSWIKYIH. The helical transmembrane segment at 679 to 699 threads the bilayer; the sequence is IHLGLYIVAGLVVLRIVVYIV. The Cytoplasmic portion of the chain corresponds to 700–859; the sequence is QMLARLRKGY…IRQGLELTLL (160 aa). Residues 709–712 carry the YXXV motif; contains endocytosis signal motif; the sequence is YRPV. Positions 715–744 are disordered; it reads SPPSYTQQIPIRKDRGQPANEETEEGGGND. C775 carries S-palmitoyl cysteine; by host lipidation. A Di-leucine internalization motif motif is present at residues 858–859; the sequence is LL.

As to quaternary structure, the mature envelope protein (Env) consists of a homotrimer of non-covalently associated gp120-gp41 heterodimers. The resulting complex protrudes from the virus surface as a spike. There seems to be as few as 10 spikes on the average virion. Interacts with human CD4, CCR5 and CXCR4, to form a P4HB/PDI-CD4-CXCR4-gp120 complex. Gp120 also interacts with the C-type lectins CD209/DC-SIGN and CLEC4M/DC-SIGNR (collectively referred to as DC-SIGN(R)). Gp120 and gp41 interact with GalCer. The mature envelope protein (Env) consists of a homotrimer of non-covalently associated gp120-gp41 heterodimers. The resulting complex protrudes from the virus surface as a spike. There seems to be as few as 10 spikes on the average virion. Specific enzymatic cleavages in vivo yield mature proteins. Envelope glycoproteins are synthesized as an inactive precursor that is heavily N-glycosylated and processed likely by host cell furin in the Golgi to yield the mature SU and TM proteins. The cleavage site between SU and TM requires the minimal sequence [KR]-X-[KR]-R. Post-translationally, palmitoylation of the transmembrane protein and of Env polyprotein (prior to its proteolytic cleavage) is essential for their association with host cell membrane lipid rafts. Palmitoylation is therefore required for envelope trafficking to classical lipid rafts, but not for viral replication.

It localises to the virion membrane. It is found in the host cell membrane. The protein localises to the host endosome membrane. Its function is as follows. The surface protein gp120 (SU) attaches the virus to the host lymphoid cell by binding to the primary receptor CD4. This interaction induces a structural rearrangement creating a high affinity binding site for a chemokine coreceptor like CXCR4 and/or CCR5. This peculiar 2 stage receptor-interaction strategy allows gp120 to maintain the highly conserved coreceptor-binding site in a cryptic conformation, protected from neutralizing antibodies. Since CD4 also displays a binding site for the disulfide-isomerase P4HB/PDI, a P4HB/PDI-CD4-CXCR4-gp120 complex may form. In that complex, P4HB/PDI could reach and reduce gp120 disulfide bonds, causing major conformational changes in gp120. TXN, another PDI family member could also be involved in disulfide rearrangements in Env during fusion. These changes are transmitted to the transmembrane protein gp41 and are thought to activate its fusogenic potential by unmasking its fusion peptide. Functionally, the surface protein gp120 is a ligand for CD209/DC-SIGN and CLEC4M/DC-SIGNR, which are respectively found on dendritic cells (DCs), and on endothelial cells of liver sinusoids and lymph node sinuses. These interactions allow capture of viral particles at mucosal surfaces by these cells and subsequent transmission to permissive cells. DCs are professional antigen presenting cells, critical for host immunity by inducing specific immune responses against a broad variety of pathogens. They act as sentinels in various tissues where they take up antigen, process it, and present it to T-cells following migration to lymphoid organs. HIV subverts the migration properties of dendritic cells to gain access to CD4+ T-cells in lymph nodes. Virus transmission to permissive T-cells occurs either in trans (without DCs infection, through viral capture and transmission), or in cis (following DCs productive infection, through the usual CD4-gp120 interaction), thereby inducing a robust infection. In trans infection, bound virions remain infectious over days and it is proposed that they are not degraded, but protected in non-lysosomal acidic organelles within the DCs close to the cell membrane thus contributing to the viral infectious potential during DCs' migration from the periphery to the lymphoid tissues. On arrival at lymphoid tissues, intact virions recycle back to DCs' cell surface allowing virus transmission to CD4+ T-cells. Virion capture also seems to lead to MHC-II-restricted viral antigen presentation, and probably to the activation of HIV-specific CD4+ cells. In terms of biological role, the transmembrane protein gp41 (TM) acts as a class I viral fusion protein. Under the current model, the protein has at least 3 conformational states: pre-fusion native state, pre-hairpin intermediate state, and post-fusion hairpin state. During fusion of viral and target intracellular membranes, the coiled coil regions (heptad repeats) assume a trimer-of-hairpins structure, positioning the fusion peptide in close proximity to the C-terminal region of the ectodomain. The formation of this structure appears to drive apposition and subsequent fusion of viral and target cell membranes. Complete fusion occurs in host cell endosomes and is dynamin-dependent, however some lipid transfer might occur at the plasma membrane. The virus undergoes clathrin-dependent internalization long before endosomal fusion, thus minimizing the surface exposure of conserved viral epitopes during fusion and reducing the efficacy of inhibitors targeting these epitopes. Membranes fusion leads to delivery of the nucleocapsid into the cytoplasm. The envelope glycoprotein gp160 precursor down-modulates cell surface CD4 antigen by interacting with it in the endoplasmic reticulum and blocking its transport to the cell surface. Its function is as follows. The gp120-gp41 heterodimer seems to contribute to T-cell depletion during HIV-1 infection. The envelope glycoproteins expressed on the surface of infected cells induce apoptosis through an interaction with uninfected cells expressing the receptor (CD4) and the coreceptors CXCR4 or CCR5. This type of bystander killing may be obtained by at least three distinct mechanisms. First, the interaction between the 2 cells can induce cellular fusion followed by nuclear fusion within the syncytium. Syncytia are condemned to die from apoptosis. Second, the 2 interacting cells may not fuse entirely and simply exchange plasma membrane lipids, after a sort of hemifusion process, followed by rapid death. Third, it is possible that virus-infected cells, on the point of undergoing apoptosis, fuse with CD4-expressing cells, in which case apoptosis is rapidly transmitted from one cell to the other and thus occurs in a sort of contagious fashion. Functionally, the gp120-gp41 heterodimer allows rapid transcytosis of the virus through CD4 negative cells such as simple epithelial monolayers of the intestinal, rectal and endocervical epithelial barriers. Both gp120 and gp41 specifically recognize glycosphingolipids galactosyl-ceramide (GalCer) or 3' sulfo-galactosyl-ceramide (GalS) present in the lipid rafts structures of epithelial cells. Binding to these alternative receptors allows the rapid transcytosis of the virus through the epithelial cells. This transcytotic vesicle-mediated transport of virions from the apical side to the basolateral side of the epithelial cells does not involve infection of the cells themselves. The chain is Envelope glycoprotein gp160 (env) from Human immunodeficiency virus type 2 subtype B (isolate D205) (HIV-2).